Here is a 196-residue protein sequence, read N- to C-terminus: Putative lipopolysaccharide biosynthesis O-acetyl transferase WbbJ (196 aa).

It belongs to the transferase hexapeptide repeat family.

The protein operates within bacterial outer membrane biogenesis; lipopolysaccharide biosynthesis. Its function is as follows. Putative O-acetyltransferase that transfers an O-acetyl group to the O antigen. This is Putative lipopolysaccharide biosynthesis O-acetyl transferase WbbJ (wbbJ) from Escherichia coli (strain K12).